The following is a 190-amino-acid chain: Peptidyl-tRNA hydrolase (190 aa).

Residue Tyr-14 coordinates tRNA. The active-site Proton acceptor is the His-19. The tRNA site is built by Tyr-64, Asn-66, and Asn-112.

This sequence belongs to the PTH family. As to quaternary structure, monomer.

The protein resides in the cytoplasm. It catalyses the reaction an N-acyl-L-alpha-aminoacyl-tRNA + H2O = an N-acyl-L-amino acid + a tRNA + H(+). In terms of biological role, hydrolyzes ribosome-free peptidyl-tRNAs (with 1 or more amino acids incorporated), which drop off the ribosome during protein synthesis, or as a result of ribosome stalling. Catalyzes the release of premature peptidyl moieties from peptidyl-tRNA molecules trapped in stalled 50S ribosomal subunits, and thus maintains levels of free tRNAs and 50S ribosomes. The sequence is that of Peptidyl-tRNA hydrolase from Pelodictyon phaeoclathratiforme (strain DSM 5477 / BU-1).